Reading from the N-terminus, the 123-residue chain is Protein Wnt-7a (123 aa).

A lipid anchor (O-palmitoleoyl serine; by PORCN) is attached at serine 1. The tract at residues 33-61 is disordered linker; sequence VEPVRTHRNKRPVFLKIKKPLSYRKPMVT. Cysteine 89 and cysteine 104 are disulfide-bonded. Residues asparagine 90 and asparagine 96 are each glycosylated (N-linked (GlcNAc...) asparagine).

It belongs to the Wnt family. Forms a soluble 1:1 complex with AFM; this prevents oligomerization and is required for prolonged biological activity. The complex with AFM may represent the physiological form in body fluids. Interacts with FZD5. Interacts with PORCN. Post-translationally, palmitoleoylation is required for efficient binding to frizzled receptors. Depalmitoleoylation leads to Wnt signaling pathway inhibition.

The protein localises to the secreted. It is found in the extracellular space. The protein resides in the extracellular matrix. Its function is as follows. Ligand for members of the frizzled family of seven transmembrane receptors that functions in the canonical Wnt/beta-catenin signaling pathway. Plays an important role in embryonic development, including dorsal versus ventral patterning during limb development, skeleton development and urogenital tract development. Required for central nervous system (CNS) angiogenesis and blood-brain barrier regulation. This is Protein Wnt-7a (WNT-7A) from Alopias vulpinus (Common thresher shark).